The sequence spans 600 residues: Arginine--tRNA ligase (600 aa).

L-arginine contacts are provided by residues 151-153 (SPN), His-162, Tyr-332, Asp-336, and Gln-360. The 'HIGH' region motif lies at 152 to 162 (PNIAKEMHIGH).

This sequence belongs to the class-I aminoacyl-tRNA synthetase family.

It carries out the reaction tRNA(Arg) + L-arginine + ATP = L-arginyl-tRNA(Arg) + AMP + diphosphate. This Acanthamoeba polyphaga mimivirus (APMV) protein is Arginine--tRNA ligase (RARS).